The chain runs to 715 residues: Palmitoyltransferase ZDHHC5 (715 aa).

Topologically, residues 1–13 (MPAESGKRFKPSK) are cytoplasmic. Residues 14 to 34 (YVPVSAAAIFLVGATTLFFAF) traverse the membrane as a helical segment. Topologically, residues 35–38 (TCPG) are extracellular. The helical transmembrane segment at 39–59 (LSLYVSPAVPIYNAIMFLFVL) threads the bilayer. At 60–148 (ANFSMATFMD…NCIGRRNYRY (89 aa)) the chain is on the cytoplasmic side. Tyrosine 91 carries the post-translational modification Phosphotyrosine; by LYN. In terms of domain architecture, DHHC spans 104–154 (KWCATCRFYRPPRCSHCSVCDNCVEEFDHHCPWVNNCIGRRNYRYFFLFLL). Residue cysteine 134 is the S-palmitoyl cysteine intermediate of the active site. Residues 149 to 169 (FFLFLLSLTAHIMGVFGFGLL) form a helical membrane-spanning segment. Over 170–191 (YVLYHIEELSGVRTAVTMAVMC) the chain is Extracellular. A helical transmembrane segment spans residues 192–212 (VAGLFFIPVAGLTGFHVVLVA). Over 213–715 (RGRTTNEQVT…VGGTTYEISV (503 aa)) the chain is Cytoplasmic. Phosphoserine is present on serine 247. Positions 289-715 (GELRRTKSKG…VGGTTYEISV (427 aa)) are disordered. Phosphothreonine is present on threonine 294. Phosphoserine is present on residues serine 296 and serine 299. Threonine 303 carries the phosphothreonine modification. Serine 345 is modified (phosphoserine). Residues threonine 348 and threonine 350 each carry the phosphothreonine modification. Positions 359-373 (SSSSTSAAMPHSSSA) are enriched in low complexity. Phosphoserine is present on residues serine 380, serine 398, serine 406, and serine 409. The residue at position 411 (threonine 411) is a Phosphothreonine. 4 positions are modified to phosphoserine: serine 415, serine 425, serine 429, and serine 432. Residues 422-432 (SSGSRSSSLKS) show a composition bias toward low complexity. Position 436 is a phosphothreonine (threonine 436). Residues 442-478 (QLQSIRSEGTTSTSYKSLANQTRNGSLSYDSLLTPSD) show a composition bias toward polar residues. Serine 529 is subject to Phosphoserine. Tyrosine 533 carries the post-translational modification Phosphotyrosine; by FYN. Serine 554 is subject to Phosphoserine. Omega-N-methylarginine is present on arginine 617. Serine 621 carries the phosphoserine modification. Threonine 659 is modified (phosphothreonine). Positions 666 to 677 (LKTTYSKSNGQP) are enriched in polar residues. Phosphoserine occurs at positions 684 and 694. An Omega-N-methylarginine modification is found at arginine 697.

The protein belongs to the DHHC palmitoyltransferase family. ERF2/ZDHHC9 subfamily. Post-translationally, phosphorylation regulates association with endocytic proteins and its subcellular localization. Phosphorylation by LYN during fatty acid uptake leads to inactivation of the activity. Autopalmitoylated. Palmitoylation of the C-terminal tail regulates stimulation-dependent plasma membrane motility.

The protein resides in the cell membrane. The protein localises to the synapse. The catalysed reaction is L-cysteinyl-[protein] + hexadecanoyl-CoA = S-hexadecanoyl-L-cysteinyl-[protein] + CoA. Palmitoyltransferase that catalyzes the addition of palmitate onto various protein substrates such as CTNND2, CD36, GSDMD, NLRP3, NOD1, NOD2, STAT3 and S1PR1 thus plays a role in various biological processes including cell adhesion, inflammation, fatty acid uptake, bacterial sensing or cardiac functions. Plays an important role in the regulation of synapse efficacy by mediating palmitoylation of delta-catenin/CTNND2, thereby increasing synaptic delivery and surface stabilization of alpha-amino-3-hydroxy-5-methyl-4-isoxazole propionic acid receptors (AMPARs). Under basal conditions, remains at the synaptic membrane through FYN-mediated phosphorylation that prevents association with endocytic proteins. Neuronal activity enhances the internalization and trafficking of DHHC5 from spines to dendritic shafts where it palmitoylates delta-catenin/CTNND2. Regulates cell adhesion at the plasma membrane by palmitoylating GOLGA7B and DSG2. Plays a role in innate immune response by mediating the palmitoylation of NOD1 and NOD2 and their proper recruitment to the bacterial entry site and phagosomes. Also participates in fatty acid uptake by palmitoylating CD36 and thereby targeting it to the plasma membrane. Upon binding of fatty acids to CD36, gets phosphorylated by LYN leading to inactivation and subsequent CD36 caveolar endocytosis. Controls oligodendrocyte development by catalyzing STAT3 palmitoylation. Acts as a regulator of inflammatory response by mediating palmitoylation of NLRP3 and GSDMD. Palmitoylates NLRP3 to promote inflammasome assembly and activation. Activates pyroptosis by catalyzing palmitoylation of gasdermin-D (GSDMD), thereby promoting membrane translocation and pore formation of GSDMD. The protein is Palmitoyltransferase ZDHHC5 of Homo sapiens (Human).